We begin with the raw amino-acid sequence, 355 residues long: Thiamine thiazole synthase, chloroplastic (355 aa).

Residues 1–42 constitute a chloroplast transit peptide; sequence MAAMATTASSLLKTSFAGARLPAAARNPTVSVAPRTGGAICN. Substrate contacts are provided by residues A96, 116-117, G124, and V189; that span reads EQ. C218 carries the 2,3-didehydroalanine (Cys) modification. Residues D220, H235, M287, and 297 to 299 contribute to the substrate site; that span reads RMG.

The protein belongs to the THI4 family. In terms of assembly, homooctamer. Fe cation serves as cofactor. In terms of processing, during the catalytic reaction, a sulfide is transferred from Cys-218 to a reaction intermediate, generating a dehydroalanine residue.

It is found in the plastid. The protein localises to the chloroplast. It carries out the reaction [ADP-thiazole synthase]-L-cysteine + glycine + NAD(+) = [ADP-thiazole synthase]-dehydroalanine + ADP-5-ethyl-4-methylthiazole-2-carboxylate + nicotinamide + 3 H2O + 2 H(+). Functionally, involved in biosynthesis of the thiamine precursor thiazole. Catalyzes the conversion of NAD and glycine to adenosine diphosphate 5-(2-hydroxyethyl)-4-methylthiazole-2-carboxylic acid (ADT), an adenylated thiazole intermediate. The reaction includes an iron-dependent sulfide transfer from a conserved cysteine residue of the protein to a thiazole intermediate. The enzyme can only undergo a single turnover, which suggests it is a suicide enzyme. May have additional roles in adaptation to various stress conditions and in DNA damage tolerance. Required fot thiamine accumulation and disease resistance toward the bacterial pathogen Xanthomonas oryzae pv oryzae (Xoo) and the fungal pathogen Magnaporthe oryzae. During infection by Xoo, functions positively in the defense pathway initiated by the resistance genes XA3 and XA26 by promoting thiamine synthesis. May function upstream of the defense-related proteins peroxidases, phenylalanine ammonia-lyases and pathogenesis-related proteins. (Microbial infection) During infection by Xanthomonas oryzae pv oryzae (Xoo), THI1 interacts with the type III effector virulence factor xadA from Xoo, which is an adhesin-like outer membrane protein. This probably attenuates the function of THI1 in defense response. The sequence is that of Thiamine thiazole synthase, chloroplastic from Oryza sativa subsp. japonica (Rice).